The primary structure comprises 158 residues: MARGNGIERVVADNRKARHDYFIEETYEAGVVLTGSEIKSIRAGQVNLRGGYVRIVNGEAWLYDVHIAPYEQSGKYFNHEPTRPRKLLLHRREISRIAGQVERQGYTLVPLRLYLRGSRAKVEIGLARGKKLYDKREDIARREARRTIDRALKERARH.

Belongs to the SmpB family.

The protein localises to the cytoplasm. Required for rescue of stalled ribosomes mediated by trans-translation. Binds to transfer-messenger RNA (tmRNA), required for stable association of tmRNA with ribosomes. tmRNA and SmpB together mimic tRNA shape, replacing the anticodon stem-loop with SmpB. tmRNA is encoded by the ssrA gene; the 2 termini fold to resemble tRNA(Ala) and it encodes a 'tag peptide', a short internal open reading frame. During trans-translation Ala-aminoacylated tmRNA acts like a tRNA, entering the A-site of stalled ribosomes, displacing the stalled mRNA. The ribosome then switches to translate the ORF on the tmRNA; the nascent peptide is terminated with the 'tag peptide' encoded by the tmRNA and targeted for degradation. The ribosome is freed to recommence translation, which seems to be the essential function of trans-translation. The polypeptide is SsrA-binding protein (Roseiflexus castenholzii (strain DSM 13941 / HLO8)).